A 194-amino-acid chain; its full sequence is Orotate phosphoribosyltransferase (194 aa).

5-phospho-alpha-D-ribose 1-diphosphate contacts are provided by residues R102, K103, K106, H108, and 129–137 (EDVVTTGGS). Orotate-binding residues include T133 and R161.

This sequence belongs to the purine/pyrimidine phosphoribosyltransferase family. PyrE subfamily. Homodimer. Mg(2+) is required as a cofactor.

It catalyses the reaction orotidine 5'-phosphate + diphosphate = orotate + 5-phospho-alpha-D-ribose 1-diphosphate. The protein operates within pyrimidine metabolism; UMP biosynthesis via de novo pathway; UMP from orotate: step 1/2. Its function is as follows. Catalyzes the transfer of a ribosyl phosphate group from 5-phosphoribose 1-diphosphate to orotate, leading to the formation of orotidine monophosphate (OMP). This Synechococcus sp. (strain CC9902) protein is Orotate phosphoribosyltransferase.